A 301-amino-acid polypeptide reads, in one-letter code: Ribosomal RNA large subunit methyltransferase F (301 aa).

Belongs to the methyltransferase superfamily. METTL16/RlmF family.

It localises to the cytoplasm. It carries out the reaction adenosine(1618) in 23S rRNA + S-adenosyl-L-methionine = N(6)-methyladenosine(1618) in 23S rRNA + S-adenosyl-L-homocysteine + H(+). In terms of biological role, specifically methylates the adenine in position 1618 of 23S rRNA. The sequence is that of Ribosomal RNA large subunit methyltransferase F from Colwellia psychrerythraea (strain 34H / ATCC BAA-681) (Vibrio psychroerythus).